The primary structure comprises 360 residues: NAD(P)H-quinone oxidoreductase subunit 1, chloroplastic (360 aa).

The next 9 helical transmembrane spans lie at 27-47, 98-118, 129-149, 165-185, 203-223, 248-268, 269-289, 297-317, and 340-360; these read IWIFVPIFSLVLGIITGVLVI, FSIGPSIAVISILLSYSVIPF, IGIFLWIAISSIAPIGLLMSG, AAQSISYEIPLTLCVLSISLL, FWGWNLWRQPIGFIIFLISSL, YSGIKFGLFYVASYLNLLISS, LFVTVLYLGGWNISIPYISIL, IFGTTICIFITLAKTYLFLFI, and FLLPISLGNLLLTTSFQLFSL.

It belongs to the complex I subunit 1 family. NDH is composed of at least 16 different subunits, 5 of which are encoded in the nucleus.

The protein localises to the plastid. Its subcellular location is the chloroplast thylakoid membrane. The enzyme catalyses a plastoquinone + NADH + (n+1) H(+)(in) = a plastoquinol + NAD(+) + n H(+)(out). It carries out the reaction a plastoquinone + NADPH + (n+1) H(+)(in) = a plastoquinol + NADP(+) + n H(+)(out). In terms of biological role, NDH shuttles electrons from NAD(P)H:plastoquinone, via FMN and iron-sulfur (Fe-S) centers, to quinones in the photosynthetic chain and possibly in a chloroplast respiratory chain. The immediate electron acceptor for the enzyme in this species is believed to be plastoquinone. Couples the redox reaction to proton translocation, and thus conserves the redox energy in a proton gradient. The protein is NAD(P)H-quinone oxidoreductase subunit 1, chloroplastic of Olimarabidopsis pumila (Dwarf rocket).